The following is an 842-amino-acid chain: Xyloglucanase Xgh74A (842 aa).

The N-terminal stretch at 1-32 is a signal peptide; that stretch reads MVKKFTSKIKAAVFAAVVAATAIFGPAISSQA. The active-site Nucleophile is the D70. 4 BNR repeats span residues 134–144, 185–196, 252–262, and 358–368; these read RSTDRGETWEK, WRSTDYGVTWSK, YRSTDGGVTWK, and FRSTDGGATWK. D480 acts as the Proton donor in catalysis. BNR repeat units lie at residues 533–541, 577–586, 616–626, 660–671, and 708–718; these read FSYDGGRNW, VTTDNGNSWK, YISTDGGLTFT, WRSTDGGYTFEK, and FRSDDAGKTWV. Positions 771-841 constitute a Dockerin domain; that stretch reads DKGLVGDLNG…LLQAIPELPK (71 aa).

Belongs to the glycosyl hydrolase 74 family.

Its function is as follows. Hydrolyzes the glucosidic bonds of unbranched Glc residues in tamarind seed xyloglucan, producing XXXG, XLXG, XXLG and XLLG. Has low activity on carboxymethylcellulose, lichenan,hydroxyethylcellulose and glucuronoxylan, and no activity on xylan, polygalaturonic acid, wheat arabinoxylan, rhamnogalacturan, curdlan, laminarin, galactomannan, galactan, arabinan and pachyman or amorphous cellulose. In Acetivibrio thermocellus (strain ATCC 27405 / DSM 1237 / JCM 9322 / NBRC 103400 / NCIMB 10682 / NRRL B-4536 / VPI 7372) (Clostridium thermocellum), this protein is Xyloglucanase Xgh74A.